A 206-amino-acid chain; its full sequence is Ribosomal RNA small subunit methyltransferase G (206 aa).

Residues Gly-74, Leu-79, 125 to 126 (VE), and Arg-140 contribute to the S-adenosyl-L-methionine site.

Belongs to the methyltransferase superfamily. RNA methyltransferase RsmG family.

The protein localises to the cytoplasm. It carries out the reaction guanosine(527) in 16S rRNA + S-adenosyl-L-methionine = N(7)-methylguanosine(527) in 16S rRNA + S-adenosyl-L-homocysteine. Its function is as follows. Specifically methylates the N7 position of guanine in position 527 of 16S rRNA. The polypeptide is Ribosomal RNA small subunit methyltransferase G (Shewanella woodyi (strain ATCC 51908 / MS32)).